A 714-amino-acid chain; its full sequence is MSPEGEESHAEDNLYFHNTQMQSIHEETLAEESHAQAIQRSISRLSSFKHEDTDSESPIPVQKVIRQIKKTNTNTNTTKTKKRKLKVSKPRKNMSSSESVRQMYGSRKNGEQQGSIDGFLMSRFGEVDGCNESDRSSKLISQGEWESLSKFHEESNEKDKLLRKKIQRYYSEPQEELGEGCGMLTQASADPETKMTKEELESLYDLDSSTVFNQTTISAIGDMSEPTQVSEPCVVILSQTKVQSEASTQEDGADASVQEIKSTVPAQELFSTPEFVPAPLEQPVNKEMCSDQSIVVLEENVQSTQADDSDIVELISDSDPEPEEVSTKVQVLRSIYDSSGPVNDKQPSVASETVESDSTPIVSPVKTPQGTRMHVVQVASSNPSSPIKIVEENTEQQEEVFTDVESIYSTARTSFGTPKHTSPVILLESSDTDCDDNDNDVEPLSSMPMVKTVPKKRMRTTVLQVSAALKVQNYTDEKNNIKLRKIGDDIPVEVPTKDVEYEEIPDSQESVGGEGDNSVSIIEITREVHNNDYTGDESTDLFQVGLNKQDTCEDTSSPVVQIGGVENDILDSSLIEPVPEPESVPVPEEVQEQPQPTAIDKHTATQLREKFQLWGLKPVRGKEKMVEILQGISNFILPEHELLAVADKQELQSCIFRKLDAVIREGRAMYDRILSFEPIRLEELQSMLQSQDHYLELDVLRLYCDSSGITTTNA.

Composition is skewed to basic and acidic residues over residues 1–14 and 24–34; these read MSPE…EDNL and IHEETLAEESH. 2 disordered regions span residues 1–114 and 338–369; these read MSPE…EQQG and SSGP…KTPQ. A compositionally biased stretch (polar residues) spans 36–46; the sequence is QAIQRSISRLS. Positions 79–92 are enriched in basic residues; the sequence is KTKKRKLKVSKPRK.

The protein belongs to the SLX4 family. Forms a heterodimer with SLX1. Post-translationally, phosphorylated in response to DNA damage.

The protein localises to the nucleus. Its function is as follows. Regulatory subunit of the SLX1-SLX4 structure-specific endonuclease that resolves DNA secondary structures generated during DNA repair and recombination. Has endonuclease activity towards branched DNA substrates, introducing single-strand cuts in duplex DNA close to junctions with ss-DNA. This Candida tropicalis (strain ATCC MYA-3404 / T1) (Yeast) protein is Structure-specific endonuclease subunit SLX4 2.